The primary structure comprises 431 residues: Histidine--tRNA ligase (431 aa).

The protein belongs to the class-II aminoacyl-tRNA synthetase family. As to quaternary structure, homodimer.

The protein localises to the cytoplasm. The enzyme catalyses tRNA(His) + L-histidine + ATP = L-histidyl-tRNA(His) + AMP + diphosphate + H(+). This Neisseria gonorrhoeae (strain ATCC 700825 / FA 1090) protein is Histidine--tRNA ligase.